We begin with the raw amino-acid sequence, 97 residues long: uncharacterized protein (97 aa).

Positions 58-97 (SLLLPRTVQTGGTEREKPGPGQRKRGAHCSACKRSSTRPS) are disordered.

This is an uncharacterized protein from Homo sapiens (Human).